A 232-amino-acid polypeptide reads, in one-letter code: Ethylene-responsive transcription factor ERF025 (232 aa).

Polar residues predominate over residues 1 to 29 (MSNNNNSPTTVNQETTTSREVSITLPTDQ). Positions 1-63 (MSNNNNSPTT…TATGLSGKHS (63 aa)) are disordered. Residues 30 to 50 (SPQTSPGSSSSPSPRPSGGSP) show a composition bias toward low complexity. The AP2/ERF DNA-binding region spans 64–120 (IFRGIRLRNGKWVSEIREPRKTTRIWLGTYPVPEMAAAAYDVAALALKGPDAVLNFP). The segment at 213–232 (PTMEDDSPENHEGDNLWSYK) is disordered.

Belongs to the AP2/ERF transcription factor family. ERF subfamily.

Its subcellular location is the nucleus. Probably acts as a transcriptional activator. Binds to the GCC-box pathogenesis-related promoter element. May be involved in the regulation of gene expression by stress factors and by components of stress signal transduction pathways. The protein is Ethylene-responsive transcription factor ERF025 (ERF025) of Arabidopsis thaliana (Mouse-ear cress).